The chain runs to 353 residues: Photosystem II protein D1 (353 aa).

The residue at position 2 (Thr-2) is an N-acetylthreonine. Position 2 is a phosphothreonine (Thr-2). The next 3 helical transmembrane spans lie at 29-46 (YIGWFGVLMIPTLLTATS), 118-133 (HFLLGVACYMGREWEL), and 142-156 (WIAVAYSAPVAAATA). Position 118 (His-118) interacts with chlorophyll a. Tyr-126 contacts pheophytin a. Residues Asp-170 and Glu-189 each contribute to the [CaMn4O5] cluster site. Residues 197 to 218 (FHMLGVAGVFGGSLFSAMHGSL) form a helical membrane-spanning segment. His-198 serves as a coordination point for chlorophyll a. A quinone-binding positions include His-215 and 264-265 (SF). His-215 serves as a coordination point for Fe cation. His-272 serves as a coordination point for Fe cation. A helical membrane pass occupies residues 274-288 (FLTAWPVVGIWFTAL). The [CaMn4O5] cluster site is built by His-332, Glu-333, Asp-342, and Ala-344. The propeptide occupies 345–353 (VVEAPSTNG).

The protein belongs to the reaction center PufL/M/PsbA/D family. In terms of assembly, PSII is composed of 1 copy each of membrane proteins PsbA, PsbB, PsbC, PsbD, PsbE, PsbF, PsbH, PsbI, PsbJ, PsbK, PsbL, PsbM, PsbT, PsbX, PsbY, PsbZ, Psb30/Ycf12, at least 3 peripheral proteins of the oxygen-evolving complex and a large number of cofactors. It forms dimeric complexes. Requires The D1/D2 heterodimer binds P680, chlorophylls that are the primary electron donor of PSII, and subsequent electron acceptors. It shares a non-heme iron and each subunit binds pheophytin, quinone, additional chlorophylls, carotenoids and lipids. D1 provides most of the ligands for the Mn4-Ca-O5 cluster of the oxygen-evolving complex (OEC). There is also a Cl(-1) ion associated with D1 and D2, which is required for oxygen evolution. The PSII complex binds additional chlorophylls, carotenoids and specific lipids. as cofactor. In terms of processing, tyr-161 forms a radical intermediate that is referred to as redox-active TyrZ, YZ or Y-Z. C-terminally processed by CTPA; processing is essential to allow assembly of the oxygen-evolving complex and thus photosynthetic growth.

The protein resides in the plastid. It localises to the chloroplast thylakoid membrane. The enzyme catalyses 2 a plastoquinone + 4 hnu + 2 H2O = 2 a plastoquinol + O2. Its function is as follows. Photosystem II (PSII) is a light-driven water:plastoquinone oxidoreductase that uses light energy to abstract electrons from H(2)O, generating O(2) and a proton gradient subsequently used for ATP formation. It consists of a core antenna complex that captures photons, and an electron transfer chain that converts photonic excitation into a charge separation. The D1/D2 (PsbA/PsbD) reaction center heterodimer binds P680, the primary electron donor of PSII as well as several subsequent electron acceptors. The polypeptide is Photosystem II protein D1 (Aethionema cordifolium (Lebanon stonecress)).